The sequence spans 186 residues: Cytochrome c oxidase subunit 4, mitochondrial (186 aa).

A mitochondrion-targeting transit peptide spans 1 to 31 (MLLSRTAVAVARRATAAPALRRSIATTVVRC). Cysteine 118, histidine 126, cysteine 142, and cysteine 145 together coordinate Zn(2+).

This sequence belongs to the cytochrome c oxidase subunit 5B family. As to quaternary structure, component of the cytochrome c oxidase (complex IV, CIV), a multisubunit enzyme composed of 11 subunits. The complex is composed of a catalytic core of 3 subunits Cox1, Cox2 and Cox3, encoded in the mitochondrial DNA, and 8 supernumerary subunits Cox4, Cox5a/Cox5, Cox6, Cox7, Cox8, Cox7a/Cox9, Cox6b/Cox12 and Cox6a/Cox13, which are encoded in the nuclear genome. The complex exists as a monomer or a dimer and forms respiratory supercomplexes (SCs) in the inner mitochondrial membrane with NADH-ubiquinone oxidoreductase (complex I, CI) and ubiquinol-cytochrome c oxidoreductase (cytochrome b-c1 complex, complex III, CIII), resulting in various different assemblies (supercomplexes I(1)IV(1), I(1)III(3)IV(2), III(2)IV(1) and III(2)IV(2) as well as larger supercomplexes of compositions like I(1)III(2)IV(5-6)).

The protein localises to the mitochondrion inner membrane. The protein operates within energy metabolism; oxidative phosphorylation. Functionally, component of the cytochrome c oxidase, the last enzyme in the mitochondrial electron transport chain which drives oxidative phosphorylation. The respiratory chain contains 3 multisubunit complexes succinate dehydrogenase (complex II, CII), ubiquinol-cytochrome c oxidoreductase (cytochrome b-c1 complex, complex III, CIII) and cytochrome c oxidase (complex IV, CIV), that cooperate to transfer electrons derived from NADH and succinate to molecular oxygen, creating an electrochemical gradient over the inner membrane that drives transmembrane transport and the ATP synthase. Cytochrome c oxidase is the component of the respiratory chain that catalyzes the reduction of oxygen to water. Electrons originating from reduced cytochrome c in the intermembrane space (IMS) are transferred via the dinuclear copper A center (CU(A)) of Cox2 and heme A of Cox1 to the active site in Cox1, a binuclear center (BNC) formed by heme A3 and copper B (CU(B)). The BNC reduces molecular oxygen to 2 water molecules using 4 electrons from cytochrome c in the IMS and 4 protons from the mitochondrial matrix. The protein is Cytochrome c oxidase subunit 4, mitochondrial (cox-4) of Neurospora crassa (strain ATCC 24698 / 74-OR23-1A / CBS 708.71 / DSM 1257 / FGSC 987).